Here is a 307-residue protein sequence, read N- to C-terminus: Regulating synaptic membrane exocytosis protein 3 (307 aa).

The interval 86 to 120 (STETGIAVEMRSRVTRQGSRESTDGSTNSNSSEGT) is disordered. A compositionally biased stretch (polar residues) spans 109 to 119 (DGSTNSNSSEG). One can recognise a C2 domain in the interval 155–273 (PMGDVHIAIM…DLSAVVTGWY (119 aa)). Residues Ser-294 and Ser-297 each carry the phosphoserine modification.

As to quaternary structure, binds PPFIA3. Does not bind RAB3. Expressed exclusively in brain with significant levels in cortex, cerebellum and olfactory bulb. Detected at lower level in hippocampus.

Its subcellular location is the synapse. Its function is as follows. Regulates synaptic membrane exocytosis. This Rattus norvegicus (Rat) protein is Regulating synaptic membrane exocytosis protein 3 (Rims3).